The sequence spans 510 residues: Glycosyl hydrolase YngK (510 aa).

The signal sequence occupies residues 1 to 30 (MKVCQKSIVRFLVSLIIGTFVISVPFMANA).

Belongs to the glycosyl hydrolase-like 10 (GHL10) family.

In Bacillus subtilis (strain 168), this protein is Glycosyl hydrolase YngK (yngK).